A 160-amino-acid polypeptide reads, in one-letter code: 2-C-methyl-D-erythritol 2,4-cyclodiphosphate synthase (160 aa).

A divalent metal cation is bound by residues Asp-9 and His-11. Residues Asp-9–His-11 and His-35–Ser-36 each bind 4-CDP-2-C-methyl-D-erythritol 2-phosphate. Position 43 (His-43) interacts with a divalent metal cation. Residues Asp-57–Gly-59, Phe-62–Asp-66, Ala-101–Ala-107, Thr-133–Glu-136, Phe-140, and Arg-143 each bind 4-CDP-2-C-methyl-D-erythritol 2-phosphate.

The protein belongs to the IspF family. In terms of assembly, homotrimer. It depends on a divalent metal cation as a cofactor.

The catalysed reaction is 4-CDP-2-C-methyl-D-erythritol 2-phosphate = 2-C-methyl-D-erythritol 2,4-cyclic diphosphate + CMP. The protein operates within isoprenoid biosynthesis; isopentenyl diphosphate biosynthesis via DXP pathway; isopentenyl diphosphate from 1-deoxy-D-xylulose 5-phosphate: step 4/6. Functionally, involved in the biosynthesis of isopentenyl diphosphate (IPP) and dimethylallyl diphosphate (DMAPP), two major building blocks of isoprenoid compounds. Catalyzes the conversion of 4-diphosphocytidyl-2-C-methyl-D-erythritol 2-phosphate (CDP-ME2P) to 2-C-methyl-D-erythritol 2,4-cyclodiphosphate (ME-CPP) with a corresponding release of cytidine 5-monophosphate (CMP). This is 2-C-methyl-D-erythritol 2,4-cyclodiphosphate synthase from Methylobacillus flagellatus (strain ATCC 51484 / DSM 6875 / VKM B-1610 / KT).